The sequence spans 195 residues: Cytochrome c oxidase subunit 1 (195 aa).

A helical membrane pass occupies residues 12 to 32; sequence MYWVLGFIFLFTLGGLTGIVL. 2 residues coordinate Mg(2+): histidine 42 and aspartate 43. Histidine 50 provides a ligand contact to heme a3. Position 52 (histidine 52) interacts with Fe(II)-heme a. 3 helical membrane-spanning segments follow: residues 59–79, 88–108, and 131–151; these read AVFA…GLVL, FIVM…LGLA, and GSLM…EAFL.

The protein belongs to the heme-copper respiratory oxidase family. In terms of assembly, component of the cytochrome c oxidase (complex IV, CIV), a multisubunit enzyme composed of a catalytic core of 3 subunits and several supernumerary subunits. The complex exists as a monomer or a dimer and forms supercomplexes (SCs) in the inner mitochondrial membrane with ubiquinol-cytochrome c oxidoreductase (cytochrome b-c1 complex, complex III, CIII). Requires heme as cofactor. It depends on Cu cation as a cofactor.

It is found in the mitochondrion inner membrane. The catalysed reaction is 4 Fe(II)-[cytochrome c] + O2 + 8 H(+)(in) = 4 Fe(III)-[cytochrome c] + 2 H2O + 4 H(+)(out). It participates in energy metabolism; oxidative phosphorylation. In terms of biological role, component of the cytochrome c oxidase, the last enzyme in the mitochondrial electron transport chain which drives oxidative phosphorylation. The respiratory chain contains 3 multisubunit complexes succinate dehydrogenase (complex II, CII), ubiquinol-cytochrome c oxidoreductase (cytochrome b-c1 complex, complex III, CIII) and cytochrome c oxidase (complex IV, CIV), that cooperate to transfer electrons derived from NADH and succinate to molecular oxygen, creating an electrochemical gradient over the inner membrane that drives transmembrane transport and the ATP synthase. Cytochrome c oxidase is the component of the respiratory chain that catalyzes the reduction of oxygen to water. Electrons originating from reduced cytochrome c in the intermembrane space (IMS) are transferred via the dinuclear copper A center (CU(A)) of subunit 2 and heme A of subunit 1 to the active site in subunit 1, a binuclear center (BNC) formed by heme A3 and copper B (CU(B)). The BNC reduces molecular oxygen to 2 water molecules using 4 electrons from cytochrome c in the IMS and 4 protons from the mitochondrial matrix. In Albinaria turrita (Door snail), this protein is Cytochrome c oxidase subunit 1 (COI).